Reading from the N-terminus, the 191-residue chain is Apoptosis regulator BHRF1 (191 aa).

The tract at residues 1–18 (MAYSTREILLALCIRDSR) is interaction with host VRK2. An N-linked (GlcNAc...) asparagine; by host glycan is attached at asparagine 22. Residues 89–109 (EIFHRGDPSLGRALAWMAWCM) carry the BH1 motif. Residues 89–142 (EIFHRGDPSLGRALAWMAWCMHACRTLCCNQSTPYYVVDLSVRGMLEASEGLDG) form an interaction with host VRK2 region. Asparagine 118 carries an N-linked (GlcNAc...) asparagine; by host glycan. Residues 142-157 (GWIHQQGGWSTLIEDN) carry the BH2 motif. A helical membrane pass occupies residues 166 to 186 (WTLFLAGLTLSLLVICSYLFI).

This sequence belongs to the Bcl-2 family. Interacts with isoform 1 of host VRK2; this interaction is involved in protecting cells from apoptosis. Interacts with host PRA1; this interaction seems to modulate BHRF1 anti-apoptotic activity. Interacts with host BCL2L11. Interacts with host BAD and BBC3. Interacts with BALF1; BALF1 acting as a negative regulator of the survival function of BHRF1. Interacts with host BECN1.

It localises to the host membrane. The protein resides in the host mitochondrion. Functionally, prevents premature death of the host cell during virus production, which would otherwise reduce the amount of progeny virus. Acts as a host B-cell leukemia/lymphoma 2 (Bcl-2) homolog, and interacts with pro-apoptotic proteins to prevent mitochondria permeabilization, release of cytochrome c and subsequent apoptosis of the host cell. In addition, plays a role in the inhibiton of host BECN1-mediated starvation-induced autophagy without affecting basal levels of autophagy. The sequence is that of Apoptosis regulator BHRF1 from Epstein-Barr virus (strain GD1) (HHV-4).